We begin with the raw amino-acid sequence, 252 residues long: 4-hydroxy-tetrahydrodipicolinate reductase (252 aa).

NAD(+) contacts are provided by residues 8-13, 84-86, and 108-111; these read GCCGKM, CST, and SANM. The active-site Proton donor/acceptor is H141. H142 provides a ligand contact to (S)-2,3,4,5-tetrahydrodipicolinate. K145 (proton donor) is an active-site residue. 151-152 provides a ligand contact to (S)-2,3,4,5-tetrahydrodipicolinate; sequence GT.

Belongs to the DapB family.

Its subcellular location is the cytoplasm. It catalyses the reaction (S)-2,3,4,5-tetrahydrodipicolinate + NAD(+) + H2O = (2S,4S)-4-hydroxy-2,3,4,5-tetrahydrodipicolinate + NADH + H(+). It carries out the reaction (S)-2,3,4,5-tetrahydrodipicolinate + NADP(+) + H2O = (2S,4S)-4-hydroxy-2,3,4,5-tetrahydrodipicolinate + NADPH + H(+). The protein operates within amino-acid biosynthesis; L-lysine biosynthesis via DAP pathway; (S)-tetrahydrodipicolinate from L-aspartate: step 4/4. Its function is as follows. Catalyzes the conversion of 4-hydroxy-tetrahydrodipicolinate (HTPA) to tetrahydrodipicolinate. The polypeptide is 4-hydroxy-tetrahydrodipicolinate reductase (Clostridium botulinum (strain Eklund 17B / Type B)).